The sequence spans 382 residues: Na(+)/H(+) antiporter NhaA 2 (382 aa).

Helical transmembrane passes span 7–27, 58–78, 94–114, 124–144, 153–173, 178–198, 199–219, 255–275, 291–311, 327–347, and 361–381; these read MVLSETFPGILLIFFTFLALL, LDLWINDGLIAIFFLCIGLEL, SLPIFGALGGMITPALIFAAI, GWAIPTATDIAFAVGILMLLG, LFLLSLAIFDDLGAIVIIALF, LSALAIIICLFCIFALLLLNY, YHITHLSLYVLVGVVLWIAML, NPWVVYFILPLFAFANAGIDI, IILGLFLGKQLGVFTFCFIAI, FYGICILTGIGFTMSLFIDGL, and LAILIASFLSAIVGFIYLKIV.

Belongs to the NhaA Na(+)/H(+) (TC 2.A.33) antiporter family.

Its subcellular location is the cell inner membrane. The catalysed reaction is Na(+)(in) + 2 H(+)(out) = Na(+)(out) + 2 H(+)(in). Its function is as follows. Na(+)/H(+) antiporter that extrudes sodium in exchange for external protons. The sequence is that of Na(+)/H(+) antiporter NhaA 2 from Campylobacter jejuni subsp. jejuni serotype O:6 (strain 81116 / NCTC 11828).